Here is a 166-residue protein sequence, read N- to C-terminus: Interferon gamma (166 aa).

An N-terminal signal peptide occupies residues 1-23; it reads MKYTSYILAFQLCIILGSSSCYS. Position 24 is a pyrrolidone carboxylic acid (Gln-24). Residues Asn-39, Asn-44, and Asn-106 are each glycosylated (N-linked (GlcNAc...) asparagine).

This sequence belongs to the type II (or gamma) interferon family. As to quaternary structure, homodimer. In terms of tissue distribution, released primarily from activated T lymphocytes.

Its subcellular location is the secreted. Produced by lymphocytes activated by specific antigens or mitogens. IFN-gamma, in addition to having antiviral activity, has important immunoregulatory functions. It is a potent activator of macrophages, it has antiproliferative effects on transformed cells and it can potentiate the antiviral and antitumor effects of the type I interferons. This is Interferon gamma (IFNG) from Marmota monax (Woodchuck).